The chain runs to 460 residues: Cysteine--tRNA ligase (460 aa).

Residue Cys28 participates in Zn(2+) binding. A 'HIGH' region motif is present at residues 30–40 (VTIYDLCHIGH). Positions 209, 234, and 238 each coordinate Zn(2+). The 'KMSKS' region signature appears at 266–270 (KMSKS). Position 269 (Lys269) interacts with ATP.

The protein belongs to the class-I aminoacyl-tRNA synthetase family. Monomer. Zn(2+) is required as a cofactor.

The protein localises to the cytoplasm. It carries out the reaction tRNA(Cys) + L-cysteine + ATP = L-cysteinyl-tRNA(Cys) + AMP + diphosphate. The sequence is that of Cysteine--tRNA ligase from Vibrio parahaemolyticus serotype O3:K6 (strain RIMD 2210633).